A 925-amino-acid chain; its full sequence is Protein translocase subunit SecA (925 aa).

Residues glutamine 87, 105-109 (GEGKT), and aspartate 515 each bind ATP. Positions 909, 911, 920, and 921 each coordinate Zn(2+).

The protein belongs to the SecA family. Monomer and homodimer. Part of the essential Sec protein translocation apparatus which comprises SecA, SecYEG and auxiliary proteins SecDF-YajC and YidC. The cofactor is Zn(2+).

The protein resides in the cell inner membrane. It localises to the cytoplasm. It carries out the reaction ATP + H2O + cellular proteinSide 1 = ADP + phosphate + cellular proteinSide 2.. Its function is as follows. Part of the Sec protein translocase complex. Interacts with the SecYEG preprotein conducting channel. Has a central role in coupling the hydrolysis of ATP to the transfer of proteins into and across the cell membrane, serving both as a receptor for the preprotein-SecB complex and as an ATP-driven molecular motor driving the stepwise translocation of polypeptide chains across the membrane. This Cupriavidus taiwanensis (strain DSM 17343 / BCRC 17206 / CCUG 44338 / CIP 107171 / LMG 19424 / R1) (Ralstonia taiwanensis (strain LMG 19424)) protein is Protein translocase subunit SecA.